A 102-amino-acid chain; its full sequence is Small ribosomal subunit protein uS10 (102 aa).

This sequence belongs to the universal ribosomal protein uS10 family. In terms of assembly, part of the 30S ribosomal subunit.

Its function is as follows. Involved in the binding of tRNA to the ribosomes. In Lactococcus lactis subsp. lactis (strain IL1403) (Streptococcus lactis), this protein is Small ribosomal subunit protein uS10.